Here is a 101-residue protein sequence, read N- to C-terminus: Small ribosomal subunit protein uS14 (101 aa).

The span at Met1–Asp10 shows a compositional bias: basic and acidic residues. The tract at residues Met1–Tyr20 is disordered.

The protein belongs to the universal ribosomal protein uS14 family. In terms of assembly, part of the 30S ribosomal subunit. Contacts proteins S3 and S10.

Its function is as follows. Binds 16S rRNA, required for the assembly of 30S particles and may also be responsible for determining the conformation of the 16S rRNA at the A site. The sequence is that of Small ribosomal subunit protein uS14 from Halorhodospira halophila (strain DSM 244 / SL1) (Ectothiorhodospira halophila (strain DSM 244 / SL1)).